The following is a 218-amino-acid chain: uncharacterized protein (218 aa).

Residues 1–67 (MARITNMGKR…KKKRSEYRRL (67 aa)) form a disordered region. The span at 29–39 (NSSNTNEESSS) shows a compositional bias: low complexity. The segment covering 40–49 (QDNMKASFGS) has biased composition (polar residues). The span at 58–67 (KKKRSEYRRL) shows a compositional bias: basic residues. 3 consecutive CCHC-type zinc fingers follow at residues 77 to 94 (KFCFACRQQGHIVQDCPE), 100 to 117 (SICFRCGSKEHSLNACSK), and 124 to 141 (AKCFICHENGHLSGQCEQ). Residues 152-168 (CCKFCSSVHHLAKDCDQ) form a CCHC-type 4; atypical zinc finger.

This is an uncharacterized protein from Schizosaccharomyces pombe (strain 972 / ATCC 24843) (Fission yeast).